Consider the following 851-residue polypeptide: DNA mismatch repair protein MutS (851 aa).

602–609 (GPNMSGKS) contacts ATP.

Belongs to the DNA mismatch repair MutS family.

Functionally, this protein is involved in the repair of mismatches in DNA. It is possible that it carries out the mismatch recognition step. This protein has a weak ATPase activity. The chain is DNA mismatch repair protein MutS from Streptococcus pyogenes serotype M6 (strain ATCC BAA-946 / MGAS10394).